Consider the following 578-residue polypeptide: Sulfite reductase [NADPH] hemoprotein beta-component (578 aa).

[4Fe-4S] cluster-binding residues include cysteine 441, cysteine 447, cysteine 487, and cysteine 491. Cysteine 491 is a siroheme binding site.

Belongs to the nitrite and sulfite reductase 4Fe-4S domain family. Alpha(8)-beta(8). The alpha component is a flavoprotein, the beta component is a hemoprotein. Siroheme is required as a cofactor. Requires [4Fe-4S] cluster as cofactor.

It catalyses the reaction hydrogen sulfide + 3 NADP(+) + 3 H2O = sulfite + 3 NADPH + 4 H(+). It functions in the pathway sulfur metabolism; hydrogen sulfide biosynthesis; hydrogen sulfide from sulfite (NADPH route): step 1/1. Functionally, component of the sulfite reductase complex that catalyzes the 6-electron reduction of sulfite to sulfide. This is one of several activities required for the biosynthesis of L-cysteine from sulfate. This Vibrio vulnificus (strain CMCP6) protein is Sulfite reductase [NADPH] hemoprotein beta-component.